The following is a 264-amino-acid chain: Acyl-[acyl-carrier-protein]--UDP-N-acetylglucosamine O-acyltransferase (264 aa).

It belongs to the transferase hexapeptide repeat family. LpxA subfamily. As to quaternary structure, homotrimer.

It is found in the cytoplasm. The catalysed reaction is a (3R)-hydroxyacyl-[ACP] + UDP-N-acetyl-alpha-D-glucosamine = a UDP-3-O-[(3R)-3-hydroxyacyl]-N-acetyl-alpha-D-glucosamine + holo-[ACP]. The protein operates within glycolipid biosynthesis; lipid IV(A) biosynthesis; lipid IV(A) from (3R)-3-hydroxytetradecanoyl-[acyl-carrier-protein] and UDP-N-acetyl-alpha-D-glucosamine: step 1/6. Involved in the biosynthesis of lipid A, a phosphorylated glycolipid that anchors the lipopolysaccharide to the outer membrane of the cell. This is Acyl-[acyl-carrier-protein]--UDP-N-acetylglucosamine O-acyltransferase from Glaesserella parasuis serovar 5 (strain SH0165) (Haemophilus parasuis).